Consider the following 533-residue polypeptide: Laccase-2 (533 aa).

Residues 1–23 form the signal peptide; that stretch reads MFPGARILATLTLALHLLHGAHA. 3 Plastocyanin-like domains span residues 25 to 171, 173 to 336, and 382 to 501; these read IGPA…LSLY, IDNA…LETN, and TAPV…FAED. Residues H98, H100, H143, and H145 each contribute to the Cu cation site. 2 cysteine pairs are disulfide-bonded: C119–C516 and C151–C238. Residues H427, H430, and H432 each coordinate Cu cation. N-linked (GlcNAc...) (high mannose) asparagine glycosylation occurs at N467. Residues H483, C484, H485, and H489 each contribute to the Cu cation site.

It belongs to the multicopper oxidase family. The cofactor is Cu cation. N-glycosylated at Asn-467; contains a high-mannose glycan with a varying number of mannose residues.

It localises to the secreted. The catalysed reaction is 4 hydroquinone + O2 = 4 benzosemiquinone + 2 H2O. In terms of biological role, lignin degradation and detoxification of lignin-derived products. The sequence is that of Laccase-2 (POX2) from Pleurotus ostreatus (Oyster mushroom).